Consider the following 137-residue polypeptide: Large ribosomal subunit protein uL16 (137 aa).

The span at 1–17 (MLQPKRTKFRKQMKGRN) shows a compositional bias: basic residues. The tract at residues 1–22 (MLQPKRTKFRKQMKGRNRGLAQ) is disordered.

Belongs to the universal ribosomal protein uL16 family. As to quaternary structure, part of the 50S ribosomal subunit.

Its function is as follows. Binds 23S rRNA and is also seen to make contacts with the A and possibly P site tRNAs. This Teredinibacter turnerae (strain ATCC 39867 / T7901) protein is Large ribosomal subunit protein uL16.